The sequence spans 371 residues: Alginate lyase (371 aa).

The N-terminal stretch at 1–26 (MQSTDLKRLLIPSLLGLAIVTGSAQA) is a signal peptide. Residues 67–68 (SK), 140–141 (HT), and Tyr258 contribute to the substrate site.

The protein belongs to the polysaccharide lyase 5 family.

It localises to the periplasm. It catalyses the reaction Eliminative cleavage of alginate to give oligosaccharides with 4-deoxy-alpha-L-erythro-hex-4-enuronosyl groups at their non-reducing ends and beta-D-mannuronate at their reducing end.. Its function is as follows. Catalyzes the depolymerization of alginate by cleaving the beta-1,4 glycosidic bond between two adjacent sugar residues via a beta-elimination mechanism. May serve to degrade mislocalized alginate that is trapped in the periplasmic space. The polypeptide is Alginate lyase (Pseudomonas fluorescens (strain ATCC BAA-477 / NRRL B-23932 / Pf-5)).